Consider the following 139-residue polypeptide: Large ribosomal subunit protein uL16c (139 aa).

Residues 1 to 17 (MLSPKKTKFRKQHRGRM) are compositionally biased toward basic residues. The disordered stretch occupies residues 1–23 (MLSPKKTKFRKQHRGRMKGSASK).

This sequence belongs to the universal ribosomal protein uL16 family. Part of the 50S ribosomal subunit.

The protein localises to the plastid. It is found in the chloroplast. This is Large ribosomal subunit protein uL16c from Porphyra purpurea (Red seaweed).